Here is a 122-residue protein sequence, read N- to C-terminus: Large ribosomal subunit protein uL14 (122 aa).

It belongs to the universal ribosomal protein uL14 family. In terms of assembly, part of the 50S ribosomal subunit. Forms a cluster with proteins L3 and L19. In the 70S ribosome, L14 and L19 interact and together make contacts with the 16S rRNA in bridges B5 and B8.

Binds to 23S rRNA. Forms part of two intersubunit bridges in the 70S ribosome. This is Large ribosomal subunit protein uL14 from Thiobacillus denitrificans (strain ATCC 25259 / T1).